Consider the following 388-residue polypeptide: S-adenosylmethionine synthase (388 aa).

His-17 contributes to the ATP binding site. Position 19 (Asp-19) interacts with Mg(2+). Position 45 (Glu-45) interacts with K(+). Residues Glu-58 and Gln-102 each coordinate L-methionine. Residues 102–112 form a flexible loop region; sequence QSADIAQGVDA. Residues 167-169, 232-233, Asp-241, 247-248, Ala-264, and Lys-268 each bind ATP; these read DSK, RF, and RK. Asp-241 serves as a coordination point for L-methionine. Lys-272 provides a ligand contact to L-methionine.

Belongs to the AdoMet synthase family. As to quaternary structure, homotetramer; dimer of dimers. Requires Mg(2+) as cofactor. K(+) is required as a cofactor.

It localises to the cytoplasm. The catalysed reaction is L-methionine + ATP + H2O = S-adenosyl-L-methionine + phosphate + diphosphate. It participates in amino-acid biosynthesis; S-adenosyl-L-methionine biosynthesis; S-adenosyl-L-methionine from L-methionine: step 1/1. Functionally, catalyzes the formation of S-adenosylmethionine (AdoMet) from methionine and ATP. The overall synthetic reaction is composed of two sequential steps, AdoMet formation and the subsequent tripolyphosphate hydrolysis which occurs prior to release of AdoMet from the enzyme. The protein is S-adenosylmethionine synthase of Paramagnetospirillum magneticum (strain ATCC 700264 / AMB-1) (Magnetospirillum magneticum).